Reading from the N-terminus, the 434-residue chain is Adenylosuccinate synthetase (434 aa).

GTP-binding positions include 14-20 and 42-44; these read GDEGKGK and GHE. Asp-15 acts as the Proton acceptor in catalysis. Residues Asp-15 and Gly-42 each coordinate Mg(2+). IMP is bound by residues 15 to 18, 40 to 43, Thr-133, Arg-147, Asn-229, Thr-244, and Arg-308; these read DEGK and NSGH. The active-site Proton donor is the His-43. 304–310 is a substrate binding site; sequence VTTGRVR. Residues Arg-310, 336–338, and 422–424 each bind GTP; these read KLD and GTG.

This sequence belongs to the adenylosuccinate synthetase family. As to quaternary structure, homodimer. The cofactor is Mg(2+).

The protein localises to the cytoplasm. The catalysed reaction is IMP + L-aspartate + GTP = N(6)-(1,2-dicarboxyethyl)-AMP + GDP + phosphate + 2 H(+). It participates in purine metabolism; AMP biosynthesis via de novo pathway; AMP from IMP: step 1/2. Its function is as follows. Plays an important role in the salvage pathway for purine nucleotide biosynthesis. Catalyzes the first committed step in the biosynthesis of AMP from IMP. This Theileria parva (East coast fever infection agent) protein is Adenylosuccinate synthetase.